The primary structure comprises 464 residues: 3-isopropylmalate dehydratase large subunit (464 aa).

3 residues coordinate [4Fe-4S] cluster: Cys337, Cys397, and Cys400.

This sequence belongs to the aconitase/IPM isomerase family. LeuC type 1 subfamily. As to quaternary structure, heterodimer of LeuC and LeuD. [4Fe-4S] cluster serves as cofactor.

The catalysed reaction is (2R,3S)-3-isopropylmalate = (2S)-2-isopropylmalate. The protein operates within amino-acid biosynthesis; L-leucine biosynthesis; L-leucine from 3-methyl-2-oxobutanoate: step 2/4. Functionally, catalyzes the isomerization between 2-isopropylmalate and 3-isopropylmalate, via the formation of 2-isopropylmaleate. In Bacillus mycoides (strain KBAB4) (Bacillus weihenstephanensis), this protein is 3-isopropylmalate dehydratase large subunit.